Here is a 206-residue protein sequence, read N- to C-terminus: Smr domain-containing protein C11H11.03c (206 aa).

The region spanning 75 to 150 (IDLHGLYIDE…NEGRIYVYLP (76 aa)) is the Smr domain.

The protein localises to the cytoplasm. Its subcellular location is the nucleus. The protein is Smr domain-containing protein C11H11.03c of Schizosaccharomyces pombe (strain 972 / ATCC 24843) (Fission yeast).